The following is a 152-amino-acid chain: Large ribosomal subunit protein uL15 (152 aa).

The tract at residues 1-66 is disordered; it reads MRSNPMTLRL…GFEGGQTPMQ (66 aa). Residues 28-38 are compositionally biased toward gly residues; it reads RGIGSGLGKTA. The span at 39–52 shows a compositional bias: basic residues; that stretch reads GRGHKGSFARKGGG.

Belongs to the universal ribosomal protein uL15 family. Part of the 50S ribosomal subunit.

Binds to the 23S rRNA. This chain is Large ribosomal subunit protein uL15, found in Xanthomonas oryzae pv. oryzae (strain KACC10331 / KXO85).